The sequence spans 2009 residues: ADP-ribosylation factor guanine nucleotide-exchange factor SEC7 (2009 aa).

The interval 1–220 (MSEQNSVVNA…ISLSSNGSNT (220 aa)) is disordered. The span at 17–33 (ISSNVETASSVNPSVKP) shows a compositional bias: polar residues. Positions 37 to 53 (IKEEAKETNGEDQKCKG) are enriched in basic and acidic residues. Acidic residues predominate over residues 91–118 (EGEDGDEDEDEDEDEDEDNGDEDDEDVD). Low complexity predominate over residues 134–143 (SVSGESTESS). Residues 144–154 (SGEDEESDESD) show a composition bias toward acidic residues. A compositionally biased stretch (low complexity) spans 155 to 165 (GNTSNSSSGDE). Residues 166-184 (SGSEEEEEEEEEEEEEENA) are compositionally biased toward acidic residues. Residues 194–209 (SVPTNDSTAPRSTHTR) show a composition bias toward polar residues. A compositionally biased stretch (low complexity) spans 210-220 (NISLSSNGSNT). Residues S212 and S215 each carry the phosphoserine modification. The residue at position 334 (T334) is a Phosphothreonine. Phosphoserine occurs at positions 447, 452, and 455. The short motif at 653–657 (NYDCN) is the HUS box element. A compositionally biased stretch (low complexity) spans 771–788 (SSARQESRSSLSNDVRSS). The segment at 771 to 814 (SSARQESRSSLSNDVRSSIMTSNDDFKPTYEDEESRSLSSQNID) is disordered. A Glycyl lysine isopeptide (Lys-Gly) (interchain with G-Cter in ubiquitin) cross-link involves residue K797. Position 807 is a phosphoserine (S807). The 187-residue stretch at 824–1010 (LKLRKTALSE…LFNEIANNEI (187 aa)) folds into the SEC7 domain. D940 is a Mg(2+) binding site. The HDS1 domain stretch occupies residues 1017-1220 (HQAMLSGDTN…QARVANPRVS (204 aa)). S1226 is subject to Phosphoserine. T1240 carries the phosphothreonine modification. Residues 1708–1723 (GRKSSVSHHQTTNDTS) are compositionally biased toward polar residues. The segment at 1708–1803 (GRKSSVSHHQ…KKTKHMKRNE (96 aa)) is disordered. A compositionally biased stretch (basic and acidic residues) spans 1724 to 1751 (QHSDDDSNDRRENDSNISETVERAHQEE). Phosphoserine is present on residues S1741 and S1752. Residues 1764–1777 (LNGQTKLNNGNSVP) are compositionally biased toward polar residues. The segment at 1836 to 1883 (FENEDFAHCIPYKEAIRITRLLEKSYEFSRDFNEDYGLRTRLVEARVV) is C2 domain-interacting region (CIR).

In terms of assembly, interacts with ARF1. Interacts (via C-terminus) with RSP5 ubiquitin ligase.

The protein resides in the cytoplasm. Its subcellular location is the golgi apparatus. It is found in the trans-Golgi network. The protein localises to the cytoplasmic vesicle. It localises to the COPI-coated vesicle membrane. The protein resides in the COPII-coated vesicle membrane. Guanine exchange factor that acts as an activator of ARF1 at the trans-Golgi network and is thus involved in vesicular budding and traffic between compartments of the Golgi apparatus. Activation of Arf (ADP-ribosylation factor) GTPases is essential for vesicle formation via recruitment of cargo adapters and coat proteins necessary for Golgi trafficking. Also plays an essential role in ER-to-Golgi traffic. SEC7 also acts as an effector of two Rab GTPases, YPT1 and YPT31/32. This chain is ADP-ribosylation factor guanine nucleotide-exchange factor SEC7, found in Saccharomyces cerevisiae (strain ATCC 204508 / S288c) (Baker's yeast).